The primary structure comprises 137 residues: Putative pre-16S rRNA nuclease (137 aa).

It belongs to the YqgF nuclease family.

It localises to the cytoplasm. In terms of biological role, could be a nuclease involved in processing of the 5'-end of pre-16S rRNA. The protein is Putative pre-16S rRNA nuclease of Actinobacillus pleuropneumoniae serotype 5b (strain L20).